The chain runs to 1170 residues: Thrombospondin-1 (1170 aa).

The signal sequence occupies residues 1-18; that stretch reads MGLAWGLGVLFLMHVCGT. Residues 47-95 form a heparin-binding region; the sequence is RLVKGPDPSSPAFRIEDANLIPPVPDDKFQDLVDAVRAEKGFLLLASLR. In terms of domain architecture, Laminin G-like spans 65 to 270; that stretch reads NLIPPVPDDK…HKTKDLQAIC (206 aa). Cysteine 171 and cysteine 232 form a disulfide bridge. Asparagine 248 and asparagine 360 each carry an N-linked (GlcNAc...) asparagine glycan. One can recognise a VWFC domain in the interval 316-373; that stretch reads PLCYHNGVQYRNNEEWTVDSCTECHCQNSVTICKKVSCPIMPCSNATVPDGECCPRCW. 3 TSP type-1 domains span residues 379 to 429, 435 to 490, and 492 to 547; these read DDGW…QECD, DGGW…DACP, and NGGW…QDCP. A C-linked (Man) tryptophan glycan is attached at tryptophan 385. Cystine bridges form between cysteine 391/cysteine 423, cysteine 395/cysteine 428, and cysteine 406/cysteine 413. Serine 394 carries O-linked (Fuc...) serine glycosylation. C-linked (Man) tryptophan glycans are attached at residues tryptophan 438 and tryptophan 441. 3 disulfides stabilise this stretch: cysteine 447-cysteine 484, cysteine 451-cysteine 489, and cysteine 462-cysteine 474. Threonine 450 is a glycosylation site (O-linked (Fuc...) threonine). C-linked (Man) tryptophan glycosylation is present at tryptophan 498. Intrachain disulfides connect cysteine 504-cysteine 541, cysteine 508-cysteine 546, cysteine 519-cysteine 531, cysteine 551-cysteine 562, cysteine 556-cysteine 572, cysteine 575-cysteine 586, cysteine 592-cysteine 608, cysteine 599-cysteine 617, cysteine 620-cysteine 644, cysteine 650-cysteine 663, cysteine 657-cysteine 676, cysteine 678-cysteine 689, cysteine 705-cysteine 713, cysteine 718-cysteine 738, cysteine 754-cysteine 774, cysteine 777-cysteine 797, cysteine 813-cysteine 833, cysteine 836-cysteine 856, cysteine 874-cysteine 894, cysteine 910-cysteine 930, and cysteine 946-cysteine 1167. Residue threonine 507 is glycosylated (O-linked (Fuc...) threonine). Residues 531–1152 are involved in retention in extracellular matrix (ECM); involved in trimer formation; that stretch reads CVGDVTENQI…YAGGRLGLFV (622 aa). The 41-residue stretch at 547 to 587 folds into the EGF-like 1 domain; sequence PIDGCLSNPCFAGVKCTSYPDGSWKCGACPPGYSGNGIQCT. Serine 553 is a glycosylation site (O-linked (Xyl) serine). Residues 646 to 690 form the EGF-like 2 domain; it reads PRNPCTDGTHDCNKNAKCNYLGHYSDPMYRCECKPGYAGNGIICG. TSP type-3 repeat units follow at residues 691–726, 727–762, 763–785, 786–821, 822–844, 845–882, 883–918, and 919–954; these read EDTD…NSGQ, EDYD…NPAQ, YDYD…NPDQ, ADTD…NVDQ, RDTD…NPDQ, LDSD…NANQ, ADHD…NPDQ, and KDSD…DISE. The N-linked (GlcNAc...) asparagine glycan is linked to asparagine 708. A disordered region spans residues 839-934; the sequence is EHNPDQLDSD…GRGDACKDDF (96 aa). 3 stretches are compositionally biased toward basic and acidic residues: residues 840–854, 883–894, and 917–934; these read HNPD…RIGD, ADHDKDGKGDAC, and DQKD…KDDF. The Cell attachment site signature appears at 926–928; that stretch reads RGD. Residues 958–1170 form the TSP C-terminal domain; sequence RRFQMIPLDP…SDLKYECRDP (213 aa). Residue asparagine 1067 is glycosylated (N-linked (GlcNAc...) asparagine).

The protein belongs to the thrombospondin family. Homotrimer; disulfide-linked. Can bind to fibrinogen, fibronectin, laminin, type V collagen and integrins alpha-V/beta-1, alpha-V/beta-3 and alpha-IIb/beta-3. Binds heparin. Interacts (via the C-terminal domain) with CD47. Interacts (via the TSP type I repeats) with CD36; the interaction conveys an antiangiogenic effect. Interacts (via the TSP type I repeats) with HRG; the interaction blocks the antiangiogenic effect of THBS1 with CD36. Interacts with ATF6 (via lumenal domain). Interacts with FN1; this interaction is enhanced by TNFAIP6, which may act as a bridging molecule between FN1 and THBS1. Interacts with SIRPA; the interaction stimulates phosphorylation of SIRPA. Expressed by platelets (at protein level). Expressed by monocyte-derived immature and mature dendritic cells (at protein level).

Its subcellular location is the secreted. It localises to the cell surface. The protein resides in the extracellular space. It is found in the extracellular matrix. The protein localises to the endoplasmic reticulum. Its subcellular location is the sarcoplasmic reticulum. Functionally, adhesive glycoprotein that mediates cell-to-cell and cell-to-matrix interactions. Multifunctional, involved in inflammation, angiogenesis, wound healing, reactive oxygen species (ROS) signaling, nitrous oxide (NO) signaling, apoptosis, senescence, aging, cellular self-renewal, stemness, and cardiovascular and metabolic homeostasis. Negatively modulates dendritic cell activation and cytokine release, as part of an autocrine feedback loop, contributing to the resolution of inflammation and immune homeostasis. Ligand for receptor CD47. Modulates nitrous oxide (NO) signaling via CD47, hence playing a role as a pressor agent, supporting blood pressure. Plays a role in endothelial cell senescence, acting via CD47, by increasing the abundance and activation of NADPH oxidase NOX1, and so generating excess ROS. Inhibits stem cell self-renewal, acting via CD47 signaling, probably by regulation of the stem cell transcription factors POU5F1/OCT4, SOX2, MYC/c-Myc and KLF4. Negatively modulates wound healing, acting via CD47. Ligand for receptor CD36. Involved in inducing apoptosis in podocytes in response to elevated free fatty acids, acting via CD36. Plays a role in suppressing angiogenesis, acting, depending on context, via CD36 or CD47. Promotes cellular senescence in a TP53-CDKN1A-RB1 signaling-dependent manner. Ligand for immunoglobulin-like cell surface receptor SIRPA. Involved in ROS signaling in non-phagocytic cells, stimulating NADPH oxidase-derived ROS production, acting via interaction with SIRPA. Plays a role in metabolic dysfunction in diet-induced obesity, perhaps acting by exacerbating adipose inflammatory activity; its effects may be mediated, at least in part, through enhanced adipocyte proliferation. Plays a role in ER stress response, via its interaction with the activating transcription factor 6 alpha (ATF6) which produces adaptive ER stress response factors. May be involved in age-related conditions, including metabolic dysregulation, during normal aging. The chain is Thrombospondin-1 from Homo sapiens (Human).